Reading from the N-terminus, the 392-residue chain is [Phe13]-bombesin receptor (392 aa).

The Extracellular portion of the chain corresponds to 1–40 (MPEGFQSLNQTLPSAISSIAHLESLNDSFILGAKQSEDVS). N-linked (GlcNAc...) asparagine glycans are attached at residues N9 and N26. A helical membrane pass occupies residues 41-62 (PGLEILALISVTYAVIISVGIL). Over 63 to 81 (GNTILIKVFFKIKSMQTVP) the chain is Cytoplasmic. The chain crosses the membrane as a helical span at residues 82–102 (NIFITSLAFGDLLLLLTCVPV). The Extracellular portion of the chain corresponds to 103–120 (DASRYIVDTWMFGRAGCK). A disulfide bridge connects residues C119 and C202. A helical transmembrane segment spans residues 121 to 142 (IISFIQLTSVGVSVFTLTVLSA). Residues 143 to 162 (DRYRAIVKPLQLQTSDAVLK) lie on the Cytoplasmic side of the membrane. The chain crosses the membrane as a helical span at residues 163–183 (TCGKAVCVWIISMLLAAPEAV). At 184-219 (FSDLYEFGSSEKNTTFEACAPYPVSEKILQETHSLI) the chain is on the extracellular side. Residues 220-240 (CFLVFYIVPLSIISAYYFLIA) traverse the membrane as a helical segment. The Cytoplasmic portion of the chain corresponds to 241–271 (KTLYKSTFNMPAEEHTHARKQIESRKRVAKT). The helical transmembrane segment at 272-292 (VLVLVALFAVCWLPNHMLYLY) threads the bilayer. The Extracellular segment spans residues 293–312 (RSFTYHSAVNSSAFHLSATI). A helical membrane pass occupies residues 313-332 (FARVLAFSNSCVNPFALYWL). Residues 333 to 392 (SRSFRQHFKKQVYCCKTEPPASQQSPTHSSTITGITAVKGNIQMSEISITLLSAYDVKKE) lie on the Cytoplasmic side of the membrane. C346 carries the S-palmitoyl cysteine lipid modification.

It belongs to the G-protein coupled receptor 1 family. Expressed only in brain, primarily in cortex and forebrain and at low levels in the midbrain.

Its subcellular location is the cell membrane. Its function is as follows. The relative rank potency of bombesin-like peptides for this receptor is [Phe13]bombesin &gt; [Leu13]bombesin &gt; GRP &gt; neuromedin-B. This Bombina orientalis (Oriental fire-bellied toad) protein is [Phe13]-bombesin receptor (BB4).